The sequence spans 144 residues: Flagellar assembly factor FliW (144 aa).

The protein belongs to the FliW family. In terms of assembly, interacts with translational regulator CsrA and flagellin(s).

The protein resides in the cytoplasm. In terms of biological role, acts as an anti-CsrA protein, binds CsrA and prevents it from repressing translation of its target genes, one of which is flagellin. Binds to flagellin and participates in the assembly of the flagellum. The sequence is that of Flagellar assembly factor FliW from Geobacillus kaustophilus (strain HTA426).